Reading from the N-terminus, the 1378-residue chain is DNA-directed RNA polymerase subunit beta (1378 aa).

This sequence belongs to the RNA polymerase beta chain family. In terms of assembly, the RNAP catalytic core consists of 2 alpha, 1 beta, 1 beta' and 1 omega subunit. When a sigma factor is associated with the core the holoenzyme is formed, which can initiate transcription.

The catalysed reaction is RNA(n) + a ribonucleoside 5'-triphosphate = RNA(n+1) + diphosphate. Its function is as follows. DNA-dependent RNA polymerase catalyzes the transcription of DNA into RNA using the four ribonucleoside triphosphates as substrates. The polypeptide is DNA-directed RNA polymerase subunit beta (Hyphomonas neptunium (strain ATCC 15444)).